Here is a 223-residue protein sequence, read N- to C-terminus: Ribose-5-phosphate isomerase A (223 aa).

Residues 32 to 35 (TGST), 85 to 88 (DGAD), and 98 to 101 (KGGG) contribute to the substrate site. Glutamate 107 (proton acceptor) is an active-site residue. Residue lysine 125 coordinates substrate.

This sequence belongs to the ribose 5-phosphate isomerase family. In terms of assembly, homodimer.

The catalysed reaction is aldehydo-D-ribose 5-phosphate = D-ribulose 5-phosphate. It functions in the pathway carbohydrate degradation; pentose phosphate pathway; D-ribose 5-phosphate from D-ribulose 5-phosphate (non-oxidative stage): step 1/1. Catalyzes the reversible conversion of ribose-5-phosphate to ribulose 5-phosphate. The chain is Ribose-5-phosphate isomerase A from Pseudomonas fluorescens (strain ATCC BAA-477 / NRRL B-23932 / Pf-5).